Here is a 407-residue protein sequence, read N- to C-terminus: Aurofusarin biosynthesis cluster protein S (407 aa).

An N-terminal signal peptide occupies residues 1 to 35; the sequence is MSKQKPSLWRALRALSFIISIPLLIQYLVLKWYST. N52, N174, N196, N274, and N312 each carry an N-linked (GlcNAc...) asparagine glycan. FAS1 domains lie at 52–192 and 195–365; these read NLTV…DTVL and PNST…DSIL.

Might be part of an extracellular enzyme complex composed of GIP1, aurF, aurO and aurS.

Its subcellular location is the secreted. It is found in the extracellular space. It functions in the pathway pigment biosynthesis. Functionally, part of the gene cluster that mediates the biosynthesis of aurofusarin, a red mycelium pigment which is acting as a mycotoxin. The first step is performed by the polyketide synthase which condenses one acetyl-CoA and 6 malonyl-CoA units to form the first intermediate, the cyclic heptaketide and yellow pigment YWA1. The C2 hydroxyl group in the pyrone ring of YWA1 is probably formed during ring closure by an aldol-type cyclization reaction. The dehydratase aurZ then acts as the first tailoring enzyme in the aurofusarin biosynthetic pathway by converting YWA1 to nor-rubrofusarin. Nor-rubrofusarin is then methylated to rubrofusarin by the O-methyltransferase aurJ. Rubrofusarin is then transported across the plasma membrane by the rubrofusarin-specific pump aurT for further enzymatic processing by the extracellular complex composed of GIP1, aurF, aurO and aurS to yield aurofusarin. The chain is Aurofusarin biosynthesis cluster protein S from Gibberella zeae (strain ATCC MYA-4620 / CBS 123657 / FGSC 9075 / NRRL 31084 / PH-1) (Wheat head blight fungus).